The sequence spans 365 residues: Putative agmatine deiminase (365 aa).

2 residues coordinate agmatine: E214 and D220. The active-site Amidino-cysteine intermediate is C357.

This sequence belongs to the agmatine deiminase family. Tetramer of two homodimers.

The enzyme catalyses agmatine + H2O = N-carbamoylputrescine + NH4(+). The polypeptide is Putative agmatine deiminase (Enterococcus faecalis (strain ATCC 700802 / V583)).